Consider the following 793-residue polypeptide: Ribosome biogenesis protein BOP1 homolog (793 aa).

The span at 1–11 shows a compositional bias: basic residues; it reads MTKKLTLKRKG. The disordered stretch occupies residues 1-168; that stretch reads MTKKLTLKRK…DSDTSDEEDI (168 aa). Acidic residues-rich tracts occupy residues 44–53, 60–72, and 83–116; these read EDTTDDEGID, SSED…DEEG, and SSEE…DGDE. Over residues 117–129 the composition is skewed to basic and acidic residues; the sequence is EKPTTSKQNKSED. A compositionally biased stretch (polar residues) spans 133–143; the sequence is SSKVSKKTQPP. Positions 146-161 are enriched in basic and acidic residues; it reads DLVKRDPSHPEYHDSD. WD repeat units follow at residues 454 to 495, 497 to 535, 579 to 621, 624 to 662, 665 to 704, 708 to 747, and 763 to 793; these read GHTD…RTIE, EDVV…KVLV, NHFK…SQIP, KSKG…LVKK, TNSK…KPYQ, LHRN…DLLQ, and REDF…RLYT.

It belongs to the WD repeat BOP1/ERB1 family.

It localises to the nucleus. The protein resides in the nucleolus. Its subcellular location is the nucleoplasm. Functionally, required for maturation of ribosomal RNAs and formation of the large ribosomal subunit. This chain is Ribosome biogenesis protein BOP1 homolog, found in Drosophila ananassae (Fruit fly).